Reading from the N-terminus, the 1433-residue chain is DNA-directed RNA polymerase subunit beta' (1433 aa).

4 residues coordinate Zn(2+): cysteine 66, cysteine 68, cysteine 81, and cysteine 84. A disordered region spans residues 328–347 (RKSSAVKTDSNRPLKSLSDS). Over residues 329–346 (KSSAVKTDSNRPLKSLSD) the composition is skewed to polar residues. Mg(2+)-binding residues include aspartate 477, aspartate 479, and aspartate 481. Zn(2+)-binding residues include cysteine 825, cysteine 899, cysteine 906, and cysteine 909.

It belongs to the RNA polymerase beta' chain family. The RNAP catalytic core consists of 2 alpha, 1 beta, 1 beta' and 1 omega subunit. When a sigma factor is associated with the core the holoenzyme is formed, which can initiate transcription. Mg(2+) is required as a cofactor. Requires Zn(2+) as cofactor.

The catalysed reaction is RNA(n) + a ribonucleoside 5'-triphosphate = RNA(n+1) + diphosphate. Its function is as follows. DNA-dependent RNA polymerase catalyzes the transcription of DNA into RNA using the four ribonucleoside triphosphates as substrates. The chain is DNA-directed RNA polymerase subunit beta' from Christiangramia forsetii (strain DSM 17595 / CGMCC 1.15422 / KT0803) (Gramella forsetii).